The sequence spans 337 residues: Anthranilate phosphoribosyltransferase (337 aa).

5-phospho-alpha-D-ribose 1-diphosphate is bound by residues glycine 81, 84–85, serine 89, 91–94, 109–117, and alanine 121; these read GD, NVST, and KHGNRAASS. Anthranilate is bound at residue glycine 81. Serine 93 contributes to the Mg(2+) binding site. Asparagine 112 serves as a coordination point for anthranilate. An anthranilate-binding site is contributed by arginine 167. Mg(2+)-binding residues include aspartate 226 and glutamate 227.

Belongs to the anthranilate phosphoribosyltransferase family. In terms of assembly, homodimer. Requires Mg(2+) as cofactor.

It carries out the reaction N-(5-phospho-beta-D-ribosyl)anthranilate + diphosphate = 5-phospho-alpha-D-ribose 1-diphosphate + anthranilate. Its pathway is amino-acid biosynthesis; L-tryptophan biosynthesis; L-tryptophan from chorismate: step 2/5. Its function is as follows. Catalyzes the transfer of the phosphoribosyl group of 5-phosphorylribose-1-pyrophosphate (PRPP) to anthranilate to yield N-(5'-phosphoribosyl)-anthranilate (PRA). The sequence is that of Anthranilate phosphoribosyltransferase from Methylobacterium sp. (strain 4-46).